Consider the following 256-residue polypeptide: Protein YIPF7 (256 aa).

Residues 1–125 are Cytoplasmic-facing; sequence MSNLAQFDSD…VDGSIMNETD (125 aa). Polar residues-rich tracts occupy residues 18–31 and 38–48; these read IDNQ…SNAY and RKQQAGEQPQP. The segment at 18-48 is disordered; it reads IDNQEQSGNDSNAYGNLYGSRKQQAGEQPQP. A helical transmembrane segment spans residues 126–146; the sequence is LTGPILFCVALGATLLLAGKV. Gln-147 is a topological domain (extracellular). A helical transmembrane segment spans residues 148-168; it reads FGYVYGMSAIGCLVIHALLNL. Residues 169 to 172 are Cytoplasmic-facing; that stretch reads MSSS. Residues 173-193 form a helical membrane-spanning segment; that stretch reads GVSYGCVASVLGYCLLPMVIL. Residues 194-196 lie on the Extracellular side of the membrane; sequence SGC. The chain crosses the membrane as a helical span at residues 197–217; sequence AMFFSLQGIFGIMSSLVIIGW. The Cytoplasmic portion of the chain corresponds to 218–235; that stretch reads CSLSASKIFIAALHMEGQ. Residues 236 to 256 form a helical membrane-spanning segment; it reads QLLVAYPCAILYGLFALLTIF.

Belongs to the YIP1 family.

It is found in the endoplasmic reticulum membrane. Its subcellular location is the golgi apparatus. It localises to the cis-Golgi network membrane. The protein localises to the trans-Golgi network membrane. This is Protein YIPF7 (YIPF7) from Homo sapiens (Human).